The primary structure comprises 826 residues: Protein FAM171B (826 aa).

The signal sequence occupies residues 1–32; the sequence is MARLCRRVPCTLLLGLAVVLLKARLVPAAARA. Over 33 to 353 the chain is Extracellular; sequence ELSRSDLSLI…DSKDITAYHT (321 aa). Positions 52 to 71 are disordered; sequence QQQQQKQLEEAEEERTEVPG. N-linked (GlcNAc...) asparagine glycans are attached at residues asparagine 108, asparagine 113, asparagine 213, and asparagine 268. The chain crosses the membrane as a helical span at residues 354–374; the sequence is VFLTAILGGTIVIVIGFFAVL. The Cytoplasmic segment spans residues 375-826; it reads LCYCRDKCGT…REERPLIPIN (452 aa). Disordered stretches follow at residues 429–448, 474–493, and 774–826; these read NAKN…AETE, QNNY…GSKQ, and HPGE…IPIN. The span at 438–448 shows a compositional bias: basic and acidic residues; that stretch reads QKKEPSKAETE. Polar residues predominate over residues 474 to 486; it reads QNNYSRNPTQSLE. The segment covering 774–786 has biased composition (basic and acidic residues); the sequence is HPGEESPGRKSTV. At serine 794 the chain carries Phosphoserine. The span at 805–826 shows a compositional bias: basic and acidic residues; it reads AKRDSKTNIWKKREERPLIPIN.

Belongs to the FAM171 family.

The protein localises to the cytoplasmic granule. The protein resides in the membrane. This Homo sapiens (Human) protein is Protein FAM171B (FAM171B).